An 844-amino-acid chain; its full sequence is SWI/SNF-related matrix-associated actin-dependent regulator of chromatin subfamily A containing DEAD/H box 1 homolog (844 aa).

Residues 1 to 23 (MSDSTVAASASASASSSAKSSLS) are compositionally biased toward low complexity. Disordered regions lie at residues 1–75 (MSDS…TKLE) and 121–180 (NCKP…STKM). Residues 30–42 (INKNASSVVASPS) show a composition bias toward polar residues. The region spanning 301–471 (TVMHKQEMNG…ISLLCFVMPK (171 aa)) is the Helicase ATP-binding domain. 314–321 (DEMGLGKT) serves as a coordination point for ATP. The DEGH box motif lies at 422-425 (DEAH). A Helicase C-terminal domain is found at 656–818 (YLDTLLPKLK…EQRCVVKLLT (163 aa)). A phosphoserine mark is found at Ser-834, Ser-838, and Ser-841.

This sequence belongs to the SNF2/RAD54 helicase family.

The protein localises to the nucleus. The catalysed reaction is ATP + H2O = ADP + phosphate + H(+). Its function is as follows. DNA helicase that possesses intrinsic ATP-dependent nucleosome-remodeling activity and is both required for DNA repair and heterochromatin organization. Promotes DNA end resection of double-strand breaks (DSBs) following DNA damage: probably acts by weakening histone DNA interactions in nucleosomes flanking DSBs. This chain is SWI/SNF-related matrix-associated actin-dependent regulator of chromatin subfamily A containing DEAD/H box 1 homolog (Etl1), found in Drosophila melanogaster (Fruit fly).